The following is a 117-amino-acid chain: Small ribosomal subunit protein bS6 (117 aa).

It belongs to the bacterial ribosomal protein bS6 family.

Binds together with bS18 to 16S ribosomal RNA. This Roseobacter denitrificans (strain ATCC 33942 / OCh 114) (Erythrobacter sp. (strain OCh 114)) protein is Small ribosomal subunit protein bS6.